Consider the following 252-residue polypeptide: Phosphoglycolate phosphatase (252 aa).

Asp13 acts as the Nucleophile in catalysis. The Mg(2+) site is built by Asp13, Asp15, and Asp192.

It belongs to the HAD-like hydrolase superfamily. CbbY/CbbZ/Gph/YieH family. In terms of assembly, monomer. The cofactor is Mg(2+). Chloride is required as a cofactor.

The catalysed reaction is 2-phosphoglycolate + H2O = glycolate + phosphate. Its pathway is organic acid metabolism; glycolate biosynthesis; glycolate from 2-phosphoglycolate: step 1/1. Its function is as follows. Specifically catalyzes the dephosphorylation of 2-phosphoglycolate. Is involved in the dissimilation of the intracellular 2-phosphoglycolate formed during the DNA repair of 3'-phosphoglycolate ends, a major class of DNA lesions induced by oxidative stress. The chain is Phosphoglycolate phosphatase from Salmonella choleraesuis (strain SC-B67).